The chain runs to 923 residues: Probable ribosylation factor GTPase-activating protein cnt6 (923 aa).

The residue at position 207 (serine 207) is a Phosphoserine. Residues 444–455 show a composition bias toward basic and acidic residues; that stretch reads TTRRDKGREMHR. The tract at residues 444-476 is disordered; it reads TTRRDKGREMHRSQVIQTSGRPKSMAPPSPSPI. The PH domain occupies 526–632; it reads KIFKEGLLLV…WIEAICEAAK (107 aa). Residues 714–837 form the Arf-GAP domain; it reads NIFIQMLRKT…AFIDFAGVDA (124 aa). Residues 730 to 754 form a C4-type zinc finger; that stretch reads CADCGSVKDVTWCSINIPVVLCIEC.

The protein resides in the cytoplasm. It is found in the cell tip. In terms of biological role, GTPase-activating protein for the ADP ribosylation factor family. This Schizosaccharomyces pombe (strain 972 / ATCC 24843) (Fission yeast) protein is Probable ribosylation factor GTPase-activating protein cnt6 (cnt6).